The chain runs to 126 residues: Nucleoside diphosphate kinase B (126 aa).

K6, F37, T68, R79, and N89 together coordinate ATP. H92 serves as the catalytic Pros-phosphohistidine intermediate.

It belongs to the NDK family. It depends on Mg(2+) as a cofactor.

The protein resides in the cytoplasm. Its subcellular location is the nucleus. It localises to the cell projection. It is found in the lamellipodium. The protein localises to the ruffle. The enzyme catalyses a 2'-deoxyribonucleoside 5'-diphosphate + ATP = a 2'-deoxyribonucleoside 5'-triphosphate + ADP. It carries out the reaction a ribonucleoside 5'-diphosphate + ATP = a ribonucleoside 5'-triphosphate + ADP. Its function is as follows. Major role in the synthesis of nucleoside triphosphates other than ATP. The protein is Nucleoside diphosphate kinase B (nme2) of Macruronus magellanicus (Patagonian grenadier).